A 257-amino-acid chain; its full sequence is Zinc transporter ZupT (257 aa).

8 consecutive transmembrane segments (helical) span residues 5–25, 32–52, 61–81, 109–129, 137–157, 171–191, 195–215, and 236–256; these read LILTLLAGAATFIGAFLGVLG, VLAFSLGFAAGIMLLISLMEM, GMSPVLGYGMFIIGLLGYFGL, AILLTLGISLHNFPEGIATFV, LGFGIALAVALHNIPEGLAVA, IFWAGISGMAEILGGVLAWLI, LVSPIVMAAIMAAVAGIMVAL, and GVLCGMSIMGLSLVILQTIGI. Asn120 and Glu123 together coordinate Fe(2+). Zn(2+) contacts are provided by Glu123 and His148. Positions 149, 152, and 181 each coordinate Fe(2+). Residue Glu152 coordinates Zn(2+).

It belongs to the ZIP transporter (TC 2.A.5) family. ZupT subfamily.

It localises to the cell inner membrane. The catalysed reaction is Zn(2+)(in) = Zn(2+)(out). Its function is as follows. Mediates zinc uptake. May also transport other divalent cations. This chain is Zinc transporter ZupT, found in Salmonella heidelberg (strain SL476).